The sequence spans 103 residues: Protein SUP-1 (103 aa).

Residues 1–16 (MMSYIALAACIGLAMA) form the signal peptide. Residues 17-75 (ANVDHDVKSAVNEVTTTKDGDTYCPVPLVGTKCGTSSIFHYWKCCGELNKECCFNLQTW) are Extracellular-facing. The helical transmembrane segment at 76–96 (VWVTLALFGVIFIASFVISLV) threads the bilayer. Over 97–103 (RCICCRK) the chain is Cytoplasmic.

As to expression, expressed in a subset of neurons and in body wall muscles. In the nervous system, expressed specifically in cholinergic motor neurons of the ventral nerve cord, a subset of cholinergic head neurons, anterior sublateral neurons, and body sublateral neurons (at protein level).

The protein resides in the cell membrane. The protein localises to the perikaryon. It localises to the cell projection. Its subcellular location is the synapse. It is found in the cytoplasmic vesicle. The protein resides in the secretory vesicle. The protein localises to the synaptic vesicle. Its function is as follows. May be involved in trafficking or stabilization of the vesicular acetylcholine transporter unc-17. This Caenorhabditis elegans protein is Protein SUP-1.